The sequence spans 231 residues: ATP synthase subunit a (231 aa).

5 helical membrane passes run 14-34 (GFLK…VLAV), 78-98 (YLGF…CTVI), 107-127 (SLST…FFGI), 174-194 (MIIG…MTAL), and 196-216 (LLTG…YIAA).

The protein belongs to the ATPase A chain family. F-type ATPases have 2 components, CF(1) - the catalytic core - and CF(0) - the membrane proton channel. CF(1) has five subunits: alpha(3), beta(3), gamma(1), delta(1), epsilon(1). CF(0) has three main subunits: a(1), b(2) and c(9-12). The alpha and beta chains form an alternating ring which encloses part of the gamma chain. CF(1) is attached to CF(0) by a central stalk formed by the gamma and epsilon chains, while a peripheral stalk is formed by the delta and b chains.

Its subcellular location is the cell inner membrane. Key component of the proton channel; it plays a direct role in the translocation of protons across the membrane. The protein is ATP synthase subunit a of Albidiferax ferrireducens (strain ATCC BAA-621 / DSM 15236 / T118) (Rhodoferax ferrireducens).